Reading from the N-terminus, the 359-residue chain is Fructose-bisphosphate aldolase, cytoplasmic isozyme 2 (359 aa).

2 residues coordinate substrate: Arg52 and Lys143. Glu184 acts as the Proton acceptor in catalysis. Lys226 serves as the catalytic Schiff-base intermediate with dihydroxyacetone-P.

Belongs to the class I fructose-bisphosphate aldolase family.

Its subcellular location is the cytoplasm. The catalysed reaction is beta-D-fructose 1,6-bisphosphate = D-glyceraldehyde 3-phosphate + dihydroxyacetone phosphate. The protein operates within carbohydrate degradation; glycolysis; D-glyceraldehyde 3-phosphate and glycerone phosphate from D-glucose: step 4/4. In Pisum sativum (Garden pea), this protein is Fructose-bisphosphate aldolase, cytoplasmic isozyme 2.